Reading from the N-terminus, the 182-residue chain is Plasmolipin (182 aa).

At 1–35 (MAEFPSKVSTRTSSPAQGAEASVSALRPDLGFVRS) the chain is on the cytoplasmic side. Ser-9 carries the post-translational modification Phosphoserine. The 135-residue stretch at 32–166 (FVRSRLGALM…SAFFSYQAWR (135 aa)) folds into the MARVEL domain. The chain crosses the membrane as a helical span at residues 36–56 (RLGALMLLQLVLGLLVWALIA). The Extracellular portion of the chain corresponds to 57 to 68 (DTPYHLYPAYGW). The helical transmembrane segment at 69 to 89 (VMFVAVFLWLVTIVLFNLYLF) threads the bilayer. At 90 to 99 (QLHMKLYMVP) the chain is on the cytoplasmic side. The helical transmembrane segment at 100 to 120 (WPLVLMIFNISATVLYITAFI) threads the bilayer. At 121-141 (ACSAAVDLTSLRGTRPYNQRA) the chain is on the extracellular side. Residues 142–162 (AASFFACLVMIAYGVSAFFSY) traverse the membrane as a helical segment. Over 163-182 (QAWRGVGSNAATSQMAGGYA) the chain is Cytoplasmic.

The protein belongs to the MAL family. In terms of assembly, forms oligomers. In terms of processing, phosphorylated.

The protein resides in the cell membrane. The protein localises to the myelin membrane. It is found in the apical cell membrane. Its subcellular location is the golgi apparatus. Main component of the myelin sheath that plays an important role in myelin membrane biogenesis and myelination. Plays an essential function in apical endocytosis. Regulates epithelial development through the regulation of apical endocytosis. Part of the intracellular machinery that mediates basolateral-to-apical transport of ICAM-1, an essential adhesion receptor in epithelial cells, from the subapical compartment in hepatic epithelial cells. The polypeptide is Plasmolipin (Homo sapiens (Human)).